A 297-amino-acid polypeptide reads, in one-letter code: Averufin oxidase stcO (297 aa).

Residues 277–297 (VVVLGVCILLLLGGLLYSIKA) form a helical membrane-spanning segment.

Belongs to the avfA family.

Its subcellular location is the membrane. The protein operates within mycotoxin biosynthesis; sterigmatocystin biosynthesis. Functionally, averufin oxidase; part of the gene cluster that mediates the biosynthesis of sterigmatocystin (ST), a polyketide-derived furanocoumarin which is part of the most toxic and carcinogenic compounds among the known mycotoxins. The first step in the biosynthesis of sterigmatocystin is the production of hexanoate by the fatty acid synthase (FAS) units stcJ and stcK. The polyketide backbone is assembled by the non-reducing polyketide synthase stcA by condensation of the starter hexanoyl-CoA and 7 malonyl-CoA extender units followed by cyclization and release of norsolorinic acid. Norsolorinic acid is the first stable intermediate in the biosynthesis of sterigmatocystin and is converted into averantin (AVN) by the ketoreductase stcE which reduces the hexanoate ketone to an alcohol. Averantin is then oxidized into 5'-hydroxyaverantin (HAVN) by the cytochrome P450 monooxygenase stcF. 5'-hydroxyaverantin is further converted to 5'-oxyaverantin (OAVN) by the 5'-hydroxyaverantin dehydrogenase stcG. The next step is the conversion of OAVN into averufin (AVF) which is catalyzed by a yet to be identified enzyme. The cytochrome P450 monooxygenase stcB and the flavin-binding monooxygenase stcW are both required for the conversion of averufin to 1-hydroxyversicolorone. The esterase stcI probably catalyzes the formation of versiconal hemiacetal acetate from 1-hydroxyversicolorone. The oxydoreductase stcN then probably catalyzes the biosynthetic step from versiconal to versicolorin B (VERB). The next step is performed by the versicolorin B desaturase stcL to produce versicolorin A (VERA). The ketoreductase stcU and the cytochrome P450 monooxygenase stcS are involved in the conversion of versicolorin A to demethylsterigmatocystin. The Baeyer-Villiger oxidas stcQ and the reductase stcR might be involved in the biosynthetic step from versicolorin A to demethylsterigmatocystin. The final step in the biosynthesis of sterigmatocystin is the methylation of demethylsterigmatocystin catalyzed by the methyltransferase stcP. This Emericella nidulans (strain FGSC A4 / ATCC 38163 / CBS 112.46 / NRRL 194 / M139) (Aspergillus nidulans) protein is Averufin oxidase stcO.